Consider the following 78-residue polypeptide: MVARRQTKKARKPAARRRSAAKRAAPAAKKAASRRRPKSAKKAKPAARRRSSVKPKAAKAAAQVRRRSRRIRRASVSK.

3 stretches are compositionally biased toward basic residues: residues 1–21, 31–57, and 64–78; these read MVAR…RSAA, AASR…KPKA, and VRRR…SVSK. Residues 1–78 are disordered; the sequence is MVARRQTKKA…RRIRRASVSK (78 aa).

Its subcellular location is the nucleus. The protein resides in the chromosome. Its function is as follows. Involved in nuclear basic protein transition: histones are replaced by spermatid specific proteins which are themselves replaced by protamines in late spermatids. This is Sperm-specific protein Phi-0 from Holothuria tubulosa (Tubular sea cucumber).